Reading from the N-terminus, the 43-residue chain is Cytochrome b559 subunit beta (43 aa).

A helical transmembrane segment spans residues 18-34; it reads WLAVHGLAIPTVFFLGG. Heme is bound at residue His-22.

This sequence belongs to the PsbE/PsbF family. As to quaternary structure, heterodimer of an alpha subunit and a beta subunit. PSII is composed of 1 copy each of membrane proteins PsbA, PsbB, PsbC, PsbD, PsbE, PsbF, PsbH, PsbI, PsbJ, PsbK, PsbL, PsbM, PsbT, PsbX, PsbY, PsbZ, Psb30/Ycf12, at least 3 peripheral proteins of the oxygen-evolving complex and a large number of cofactors. It forms dimeric complexes. Heme b is required as a cofactor.

The protein resides in the plastid. Its subcellular location is the chloroplast thylakoid membrane. In terms of biological role, this b-type cytochrome is tightly associated with the reaction center of photosystem II (PSII). PSII is a light-driven water:plastoquinone oxidoreductase that uses light energy to abstract electrons from H(2)O, generating O(2) and a proton gradient subsequently used for ATP formation. It consists of a core antenna complex that captures photons, and an electron transfer chain that converts photonic excitation into a charge separation. The sequence is that of Cytochrome b559 subunit beta from Thalassiosira pseudonana (Marine diatom).